The primary structure comprises 553 residues: Arginine--tRNA ligase (553 aa).

Positions Ala-130–His-140 match the 'HIGH' region motif.

This sequence belongs to the class-I aminoacyl-tRNA synthetase family. In terms of assembly, monomer.

It is found in the cytoplasm. It carries out the reaction tRNA(Arg) + L-arginine + ATP = L-arginyl-tRNA(Arg) + AMP + diphosphate. This chain is Arginine--tRNA ligase, found in Staphylococcus aureus (strain bovine RF122 / ET3-1).